The chain runs to 150 residues: Large ribosomal subunit protein uL13 (150 aa).

This sequence belongs to the universal ribosomal protein uL13 family. In terms of assembly, part of the 50S ribosomal subunit.

Its function is as follows. This protein is one of the early assembly proteins of the 50S ribosomal subunit, although it is not seen to bind rRNA by itself. It is important during the early stages of 50S assembly. This is Large ribosomal subunit protein uL13 from Chlamydia trachomatis serovar A (strain ATCC VR-571B / DSM 19440 / HAR-13).